The following is a 447-amino-acid chain: D-ribitol-5-phosphate cytidylyltransferase (447 aa).

Belongs to the IspD/TarI cytidylyltransferase family. IspD subfamily. Homodimer.

The protein resides in the cytoplasm. It is found in the cytosol. It carries out the reaction D-ribitol 5-phosphate + CTP + H(+) = CDP-L-ribitol + diphosphate. The catalysed reaction is D-ribose 5-phosphate + CTP + H(+) = CDP-D-ribose + diphosphate. It catalyses the reaction D-ribulose 5-phosphate + CTP + H(+) = CDP-D-ribulose + diphosphate. It functions in the pathway protein modification; protein glycosylation. In terms of biological role, cytidylyltransferase required for protein O-linked mannosylation. Catalyzes the formation of CDP-ribitol nucleotide sugar from D-ribitol 5-phosphate. CDP-ribitol is a substrate of FKTN during the biosynthesis of the phosphorylated O-mannosyl trisaccharide (N-acetylgalactosamine-beta-3-N-acetylglucosamine-beta-4-(phosphate-6-)mannose), a carbohydrate structure present in alpha-dystroglycan (DAG1), which is required for binding laminin G-like domain-containing extracellular proteins with high affinity. Shows activity toward other pentose phosphate sugars and mediates formation of CDP-ribulose or CDP-ribose using CTP and ribulose-5-phosphate or ribose-5-phosphate, respectively. Not involved in dolichol production. The protein is D-ribitol-5-phosphate cytidylyltransferase (Crppa) of Mus musculus (Mouse).